A 164-amino-acid polypeptide reads, in one-letter code: Crossover junction endodeoxyribonuclease RuvC (164 aa).

Residues Asp-7, Glu-67, and Asp-139 contribute to the active site. Mg(2+) is bound by residues Asp-7, Glu-67, and Asp-139.

The protein belongs to the RuvC family. Homodimer which binds Holliday junction (HJ) DNA. The HJ becomes 2-fold symmetrical on binding to RuvC with unstacked arms; it has a different conformation from HJ DNA in complex with RuvA. In the full resolvosome a probable DNA-RuvA(4)-RuvB(12)-RuvC(2) complex forms which resolves the HJ. It depends on Mg(2+) as a cofactor.

The protein localises to the cytoplasm. It catalyses the reaction Endonucleolytic cleavage at a junction such as a reciprocal single-stranded crossover between two homologous DNA duplexes (Holliday junction).. The RuvA-RuvB-RuvC complex processes Holliday junction (HJ) DNA during genetic recombination and DNA repair. Endonuclease that resolves HJ intermediates. Cleaves cruciform DNA by making single-stranded nicks across the HJ at symmetrical positions within the homologous arms, yielding a 5'-phosphate and a 3'-hydroxyl group; requires a central core of homology in the junction. The consensus cleavage sequence is 5'-(A/T)TT(C/G)-3'. Cleavage occurs on the 3'-side of the TT dinucleotide at the point of strand exchange. HJ branch migration catalyzed by RuvA-RuvB allows RuvC to scan DNA until it finds its consensus sequence, where it cleaves and resolves the cruciform DNA. The polypeptide is Crossover junction endodeoxyribonuclease RuvC (Citrifermentans bemidjiense (strain ATCC BAA-1014 / DSM 16622 / JCM 12645 / Bem) (Geobacter bemidjiensis)).